A 220-amino-acid chain; its full sequence is Ribose-5-phosphate isomerase A (220 aa).

Substrate-binding positions include 28 to 31 (TGST), 81 to 84 (DGAD), and 94 to 97 (KGGG). The Proton acceptor role is filled by Glu103. Lys121 serves as a coordination point for substrate.

Belongs to the ribose 5-phosphate isomerase family. Homodimer.

It carries out the reaction aldehydo-D-ribose 5-phosphate = D-ribulose 5-phosphate. It functions in the pathway carbohydrate degradation; pentose phosphate pathway; D-ribose 5-phosphate from D-ribulose 5-phosphate (non-oxidative stage): step 1/1. Functionally, catalyzes the reversible conversion of ribose-5-phosphate to ribulose 5-phosphate. This is Ribose-5-phosphate isomerase A from Shewanella putrefaciens (strain CN-32 / ATCC BAA-453).